Here is a 122-residue protein sequence, read N- to C-terminus: Large ribosomal subunit protein uL14c (122 aa).

Belongs to the universal ribosomal protein uL14 family. In terms of assembly, part of the 50S ribosomal subunit.

It localises to the plastid. The protein resides in the chloroplast. In terms of biological role, binds to 23S rRNA. This Panax ginseng (Korean ginseng) protein is Large ribosomal subunit protein uL14c.